The chain runs to 86 residues: MAEADDPQDIADRERIFKRFDANGDGQISATELGETLQTLGSVTPEEVKYMMDEIDTNKDGFISFQEFIEFARANRGLIRDVAKIF.

EF-hand domains are found at residues 8-42 and 43-78; these read QDIADRERIFKRFDANGDGQISATELGETLQTLGS and VTPEEVKYMMDEIDTNKDGFISFQEFIEFARANRGL. Ca(2+) contacts are provided by Asp-21, Asn-23, Asp-25, Gln-27, Glu-32, Asp-56, Asn-58, Asp-60, and Glu-67.

The polypeptide is Polcalcin Nic t 2 (Nict2) (Nicotiana tabacum (Common tobacco)).